The sequence spans 332 residues: Fructose-bisphosphate aldolase (332 aa).

Ser56 provides a ligand contact to D-glyceraldehyde 3-phosphate. Asp93 serves as the catalytic Proton donor. Residues His94, Asp115, Glu147, and His191 each contribute to the Zn(2+) site. Gly192 is a dihydroxyacetone phosphate binding site. His234 serves as a coordination point for Zn(2+). Dihydroxyacetone phosphate-binding positions include 235-237 and 277-280; these read GAS and NIDS.

This sequence belongs to the class II fructose-bisphosphate aldolase family. Homodimer. The cofactor is Zn(2+).

It catalyses the reaction beta-D-fructose 1,6-bisphosphate = D-glyceraldehyde 3-phosphate + dihydroxyacetone phosphate. It functions in the pathway carbohydrate degradation; glycolysis; D-glyceraldehyde 3-phosphate and glycerone phosphate from D-glucose: step 4/4. Functionally, catalyzes the aldol condensation of dihydroxyacetone phosphate (DHAP or glycerone-phosphate) with glyceraldehyde 3-phosphate (G3P) to form fructose 1,6-bisphosphate (FBP) in gluconeogenesis and the reverse reaction in glycolysis. In Treponema pallidum (strain Nichols), this protein is Fructose-bisphosphate aldolase (fba).